A 43-amino-acid polypeptide reads, in one-letter code: Putative inhibitor of glucose uptake transporter SgrT (43 aa).

In terms of biological role, acts to promote recovery from glucose-phosphate stress due to intracellular accumulation of glucose-6-phosphate caused by disruption of glycolytic flux or in the presence of (toxic) non-metabolizable glucose phosphate analogs. It may do so by inhibiting the transporter activity for glucose uptake (PtsG) as cells that overexpress this protein do not seem to import glucose although they have nearly wild-type levels of PtsG. The protein is Putative inhibitor of glucose uptake transporter SgrT (sgrT) of Escherichia coli (strain K12).